A 188-amino-acid polypeptide reads, in one-letter code: MAPTPDRDGQDKKVCLGVVTGAHGVRGLVRVKPYTEMPEGVAAYGPVETKDGATSFAISLKGMAKDLVICKLEGVDDRDVAAALRGTELYVPRERLPRASGDEEGWYYADLIGLRAVGLDGRDYGRIAGVENFGAGDLLEIAPAEGGQTVLMGFTDENVPEVDIAGGRVVIDPPAGTFGDDAEAERGE.

The 75-residue stretch at 103–177 (EEGWYYADLI…RVVIDPPAGT (75 aa)) folds into the PRC barrel domain.

This sequence belongs to the RimM family. Binds ribosomal protein uS19.

The protein localises to the cytoplasm. Functionally, an accessory protein needed during the final step in the assembly of 30S ribosomal subunit, possibly for assembly of the head region. Essential for efficient processing of 16S rRNA. May be needed both before and after RbfA during the maturation of 16S rRNA. It has affinity for free ribosomal 30S subunits but not for 70S ribosomes. This Parvibaculum lavamentivorans (strain DS-1 / DSM 13023 / NCIMB 13966) protein is Ribosome maturation factor RimM.